Consider the following 202-residue polypeptide: Small ribosomal subunit protein uS4c (202 aa).

One can recognise an S4 RNA-binding domain in the interval 90–153 (MRLDNVIFRL…KSETIISKNI (64 aa)).

This sequence belongs to the universal ribosomal protein uS4 family. Part of the 30S ribosomal subunit. Contacts protein S5. The interaction surface between S4 and S5 is involved in control of translational fidelity.

It localises to the plastid. The protein resides in the chloroplast. In terms of biological role, one of the primary rRNA binding proteins, it binds directly to 16S rRNA where it nucleates assembly of the body of the 30S subunit. Its function is as follows. With S5 and S12 plays an important role in translational accuracy. This chain is Small ribosomal subunit protein uS4c (rps4), found in Sphaerocarpos donnelli (Liverwort).